The primary structure comprises 751 residues: Palmitoyltransferase ZDHHC8B (751 aa).

The Cytoplasmic segment spans residues 1 to 13 (MPNSVGKRFKPTK). A helical membrane pass occupies residues 14–34 (YIPVSTAATLLVGSTTLFFVF). Over 35 to 41 (TCPWLTK) the chain is Extracellular. The helical transmembrane segment at 42–62 (AVSPVVPLYNGIVFLFVLANF) threads the bilayer. Residues 63–148 (SMATFMDPGV…NCIGRRNYRY (86 aa)) are Cytoplasmic-facing. In terms of domain architecture, DHHC spans 104–154 (KWCATCHFYRPPRCSHCSVCDNCVEEFDHHCPWVNNCIGRRNYRYFFLFLL). Residue C134 is the S-palmitoyl cysteine intermediate of the active site. The helical transmembrane segment at 149–169 (FFLFLLSLSVHMVGVFSFGLL) threads the bilayer. Topologically, residues 170 to 185 (FVLHHLETLSALHTTV) are extracellular. The helical transmembrane segment at 186–206 (TLVVMCVTGLFFIPVMGLTGF) threads the bilayer. The Cytoplasmic segment spans residues 207 to 751 (HMVLVARGRT…VGGTTYEISV (545 aa)). 5 disordered regions span residues 293-346 (RSKS…PSTP), 437-461 (CTPLGGTKHETITSTPHRGVFSPGT), 633-659 (RSSASSLVRAPRTSTTSLHTDGGGMNR), 666-685 (RSPVHQSHQSPTSVPRSPSY), and 703-736 (HLGTREDIGQGKVNGQLKGQYGTPSGTPSRHTSV). Low complexity predominate over residues 326-338 (SQLTSSEESSLSS). 3 stretches are compositionally biased toward polar residues: residues 633–651 (RSSASSLVRAPRTSTTSLH), 669–681 (VHQSHQSPTSVPR), and 724–733 (GTPSGTPSRH).

It belongs to the DHHC palmitoyltransferase family. ERF2/ZDHHC9 subfamily.

The protein resides in the golgi apparatus membrane. The protein localises to the mitochondrion membrane. The catalysed reaction is L-cysteinyl-[protein] + hexadecanoyl-CoA = S-hexadecanoyl-L-cysteinyl-[protein] + CoA. Palmitoyltransferase that catalyzes the addition of palmitate onto various protein substrates and therefore function in several unrelated biological processes. The protein is Palmitoyltransferase ZDHHC8B of Danio rerio (Zebrafish).